A 547-amino-acid chain; its full sequence is Serine beta-lactamase-like protein LACTB, mitochondrial (547 aa).

Residues 1 to 115 constitute a mitochondrion transit peptide; the sequence is MYRLMSAVTA…RAIESSRDLL (115 aa). Residues 62–83 show a composition bias toward low complexity; sequence GAAPAQSPAAPDPEASPLAEPP. Residues 62–96 are disordered; the sequence is GAAPAQSPAAPDPEASPLAEPPQEQSLAPWSPQTP. The Acyl-ester intermediate role is filled by Ser164. Residues Lys283 and Lys284 each carry the N6-succinyllysine modification. Lys297 and Lys342 each carry N6-acetyllysine.

Belongs to the peptidase S12 family. As to expression, expressed predominantly in skeletal muscle.

Its subcellular location is the mitochondrion. Its function is as follows. Mitochondrial serine protease that acts as a regulator of mitochondrial lipid metabolism. Acts by decreasing protein levels of PISD, a mitochondrial enzyme that converts phosphatidylserine (PtdSer) to phosphatidylethanolamine (PtdEtn), thereby affecting mitochondrial lipid metabolism. It is unclear whether it acts directly by mediating proteolysis of PISD or by mediating proteolysis of another lipid metabolism protein. Acts as a tumor suppressor that has the ability to inhibit proliferation of multiple types of breast cancer cells: probably by promoting decreased levels of PISD, thereby affecting mitochondrial lipid metabolism. The protein is Serine beta-lactamase-like protein LACTB, mitochondrial of Homo sapiens (Human).